The following is a 229-amino-acid chain: PKHD-type hydroxylase BBta_3541 (229 aa).

A Fe2OG dioxygenase domain is found at 78-180 (QIFPPLFNRY…RVASFFWMQS (103 aa)). His98, Asp100, and His161 together coordinate Fe cation. Residue Arg171 participates in 2-oxoglutarate binding.

It depends on Fe(2+) as a cofactor. L-ascorbate is required as a cofactor.

This Bradyrhizobium sp. (strain BTAi1 / ATCC BAA-1182) protein is PKHD-type hydroxylase BBta_3541.